Here is a 353-residue protein sequence, read N- to C-terminus: Protein RecA (353 aa).

73-80 (GPESSGKT) is a binding site for ATP.

The protein belongs to the RecA family.

The protein localises to the cytoplasm. Functionally, can catalyze the hydrolysis of ATP in the presence of single-stranded DNA, the ATP-dependent uptake of single-stranded DNA by duplex DNA, and the ATP-dependent hybridization of homologous single-stranded DNAs. It interacts with LexA causing its activation and leading to its autocatalytic cleavage. The protein is Protein RecA of Bordetella avium (strain 197N).